The chain runs to 276 residues: Glutamate racemase (276 aa).

Substrate is bound by residues 10–11 (DS) and 42–43 (YG). C74 serves as the catalytic Proton donor/acceptor. 75–76 (NT) contacts substrate. The active-site Proton donor/acceptor is the C185. Residue 186–187 (TH) coordinates substrate.

The protein belongs to the aspartate/glutamate racemases family.

It carries out the reaction L-glutamate = D-glutamate. It participates in cell wall biogenesis; peptidoglycan biosynthesis. In terms of biological role, provides the (R)-glutamate required for cell wall biosynthesis. The protein is Glutamate racemase of Levilactobacillus brevis (Lactobacillus brevis).